A 342-amino-acid chain; its full sequence is Phosphate acyltransferase (342 aa).

It belongs to the PlsX family. As to quaternary structure, homodimer. Probably interacts with PlsY.

The protein resides in the cytoplasm. The enzyme catalyses a fatty acyl-[ACP] + phosphate = an acyl phosphate + holo-[ACP]. It participates in lipid metabolism; phospholipid metabolism. In terms of biological role, catalyzes the reversible formation of acyl-phosphate (acyl-PO(4)) from acyl-[acyl-carrier-protein] (acyl-ACP). This enzyme utilizes acyl-ACP as fatty acyl donor, but not acyl-CoA. This is Phosphate acyltransferase from Shewanella sp. (strain ANA-3).